The sequence spans 176 residues: RING-H2 finger protein ATL14 (176 aa).

Residues 1 to 26 (MSITIPYDGSISREPSPSPPPPKANT) form a disordered region. A helical transmembrane segment spans residues 37 to 57 (FLIGLIMIPVAITAFIFILTS). An RING-type; atypical zinc finger spans residues 115 to 157 (CVVCIDGFRQGQWCRKLPRCGHVFHRKCVDLWLIKVSTCPICR).

This sequence belongs to the RING-type zinc finger family. ATL subfamily.

It localises to the membrane. The catalysed reaction is S-ubiquitinyl-[E2 ubiquitin-conjugating enzyme]-L-cysteine + [acceptor protein]-L-lysine = [E2 ubiquitin-conjugating enzyme]-L-cysteine + N(6)-ubiquitinyl-[acceptor protein]-L-lysine.. It functions in the pathway protein modification; protein ubiquitination. This Arabidopsis thaliana (Mouse-ear cress) protein is RING-H2 finger protein ATL14 (ATL14).